We begin with the raw amino-acid sequence, 292 residues long: Pantothenate synthetase (292 aa).

32–39 (MGFLHEGH) provides a ligand contact to ATP. Residue His39 is the Proton donor of the active site. Gln63 is a binding site for (R)-pantoate. Gln63 serves as a coordination point for beta-alanine. Residue 150–153 (GEKD) participates in ATP binding. Gln156 serves as a coordination point for (R)-pantoate. Residues Val179 and 187–190 (MSSR) contribute to the ATP site.

This sequence belongs to the pantothenate synthetase family. As to quaternary structure, homodimer.

The protein localises to the cytoplasm. The catalysed reaction is (R)-pantoate + beta-alanine + ATP = (R)-pantothenate + AMP + diphosphate + H(+). It participates in cofactor biosynthesis; (R)-pantothenate biosynthesis; (R)-pantothenate from (R)-pantoate and beta-alanine: step 1/1. Catalyzes the condensation of pantoate with beta-alanine in an ATP-dependent reaction via a pantoyl-adenylate intermediate. This is Pantothenate synthetase from Myxococcus xanthus (strain DK1622).